A 1114-amino-acid polypeptide reads, in one-letter code: Transcriptional repressor NF-X1 (1114 aa).

Positions 9-26 are interaction with PABPC1 and PABC4; the sequence is GTFKFNTDAAEFIPQERK. 3 disordered regions span residues 20–220, 232–287, and 299–325; these read FIPQ…CRKP, QRRY…PTKS, and KSSR…FPRG. Residues S50, S81, S92, S126, S130, and S147 each carry the phosphoserine modification. Polar residues-rich tracts occupy residues 72-103 and 121-142; these read SYAS…NQPW and LSEQ…SGTN. Basic and acidic residues-rich tracts occupy residues 143-156, 185-202, 232-248, and 304-315; these read PREH…KEVV, LRSE…DENT, QRRY…EGAR, and VNQEKTAVRRQD. Phosphoserine is present on S320. The RING-type; atypical zinc-finger motif lies at 352–403; that stretch reads CMVCCELVQVTAPVWSCQSCFHVFHLNCIKKWARSPASHADGQSGWRCPACQ. 8 NF-X1-type zinc fingers span residues 447 to 465, 500 to 519, 561 to 580, 626 to 649, 688 to 707, 715 to 734, 826 to 848, and 857 to 878; these read CPHS…PCPA, CGQH…PCRI, CGSH…PCPR, CGSS…PCSR, CGRH…KCPL, CGLH…TCWQ, CGMH…ACKQ, and CGHP…ACKA. The region spanning 988–1056 is the R3H domain; sequence LKFVSDVEKE…KRNVVVTAVR (69 aa). The segment at 1071–1095 is disordered; sequence ERETQTRPPPPIPHHRHQADKAPGS.

The protein belongs to the NFX1 family. In terms of assembly, interacts with PABPC1 and PABPC4. In terms of tissue distribution, ubiquitously expressed, with highest levels in thymus.

It is found in the nucleus. In terms of biological role, binds to the X-box motif of MHC class II genes and represses their expression. May play an important role in regulating the duration of an inflammatory response by limiting the period in which MHC class II molecules are induced by interferon-gamma. Together with PABPC1 or PABPC4, acts as a coactivator for TERT expression. Mediates E2-dependent ubiquitination. The sequence is that of Transcriptional repressor NF-X1 (Nfx1) from Mus musculus (Mouse).